The chain runs to 493 residues: 3-octaprenyl-4-hydroxybenzoate carboxy-lyase (493 aa).

Residue N172 coordinates Mn(2+). Residues 175-177 (IYR), 189-191 (RWL), and 194-195 (RG) each bind prenylated FMN. E238 contributes to the Mn(2+) binding site. D287 serves as the catalytic Proton donor.

This sequence belongs to the UbiD family. Homohexamer. The cofactor is prenylated FMN. Requires Mn(2+) as cofactor.

It localises to the cell membrane. The enzyme catalyses a 4-hydroxy-3-(all-trans-polyprenyl)benzoate + H(+) = a 2-(all-trans-polyprenyl)phenol + CO2. Its pathway is cofactor biosynthesis; ubiquinone biosynthesis. In terms of biological role, catalyzes the decarboxylation of 3-octaprenyl-4-hydroxy benzoate to 2-octaprenylphenol, an intermediate step in ubiquinone biosynthesis. This chain is 3-octaprenyl-4-hydroxybenzoate carboxy-lyase, found in Shewanella denitrificans (strain OS217 / ATCC BAA-1090 / DSM 15013).